The sequence spans 466 residues: Ribulose bisphosphate carboxylase large chain (466 aa).

K5 bears the N6,N6,N6-trimethyllysine mark. The substrate site is built by N114 and T164. The Proton acceptor role is filled by K166. K168 is a substrate binding site. K192, D194, and E195 together coordinate Mg(2+). N6-carboxylysine is present on K192. The Proton acceptor role is filled by H285. Positions 286, 318, and 370 each coordinate substrate.

It belongs to the RuBisCO large chain family. Type I subfamily. As to quaternary structure, heterohexadecamer of 8 large chains and 8 small chains; disulfide-linked. The disulfide link is formed within the large subunit homodimers. Requires Mg(2+) as cofactor. The disulfide bond which can form in the large chain dimeric partners within the hexadecamer appears to be associated with oxidative stress and protein turnover.

It localises to the plastid. Its subcellular location is the chloroplast. The catalysed reaction is 2 (2R)-3-phosphoglycerate + 2 H(+) = D-ribulose 1,5-bisphosphate + CO2 + H2O. It carries out the reaction D-ribulose 1,5-bisphosphate + O2 = 2-phosphoglycolate + (2R)-3-phosphoglycerate + 2 H(+). Functionally, ruBisCO catalyzes two reactions: the carboxylation of D-ribulose 1,5-bisphosphate, the primary event in carbon dioxide fixation, as well as the oxidative fragmentation of the pentose substrate in the photorespiration process. Both reactions occur simultaneously and in competition at the same active site. This is Ribulose bisphosphate carboxylase large chain from Thespesia populnea (Portia tree).